The primary structure comprises 52 residues: Conotoxin Cal6.3b (52 aa).

Positions Lys-1–Arg-4 are excised as a propeptide. Disulfide bonds link Cys-12–Cys-23, Cys-15–Cys-27, and Cys-22–Cys-30. Gln-50 carries the post-translational modification Glutamine amide.

As to expression, expressed by the venom duct.

It localises to the secreted. In terms of biological role, probable neurotoxin with unknown target. Possibly targets ion channels. The protein is Conotoxin Cal6.3b of Californiconus californicus (California cone).